A 207-amino-acid chain; its full sequence is Thiamine-phosphate synthase (207 aa).

4-amino-2-methyl-5-(diphosphooxymethyl)pyrimidine is bound by residues 35-39 and asparagine 67; that span reads QYRDK. Residues aspartate 68 and aspartate 86 each contribute to the Mg(2+) site. Threonine 105 contacts 4-amino-2-methyl-5-(diphosphooxymethyl)pyrimidine. 2-[(2R,5Z)-2-carboxy-4-methylthiazol-5(2H)-ylidene]ethyl phosphate is bound at residue 132–134; sequence SVT. Lysine 135 lines the 4-amino-2-methyl-5-(diphosphooxymethyl)pyrimidine pocket. Glycine 162 contributes to the 2-[(2R,5Z)-2-carboxy-4-methylthiazol-5(2H)-ylidene]ethyl phosphate binding site.

The protein belongs to the thiamine-phosphate synthase family. Mg(2+) serves as cofactor.

It carries out the reaction 2-[(2R,5Z)-2-carboxy-4-methylthiazol-5(2H)-ylidene]ethyl phosphate + 4-amino-2-methyl-5-(diphosphooxymethyl)pyrimidine + 2 H(+) = thiamine phosphate + CO2 + diphosphate. It catalyses the reaction 2-(2-carboxy-4-methylthiazol-5-yl)ethyl phosphate + 4-amino-2-methyl-5-(diphosphooxymethyl)pyrimidine + 2 H(+) = thiamine phosphate + CO2 + diphosphate. The enzyme catalyses 4-methyl-5-(2-phosphooxyethyl)-thiazole + 4-amino-2-methyl-5-(diphosphooxymethyl)pyrimidine + H(+) = thiamine phosphate + diphosphate. Its pathway is cofactor biosynthesis; thiamine diphosphate biosynthesis; thiamine phosphate from 4-amino-2-methyl-5-diphosphomethylpyrimidine and 4-methyl-5-(2-phosphoethyl)-thiazole: step 1/1. Functionally, condenses 4-methyl-5-(beta-hydroxyethyl)thiazole monophosphate (THZ-P) and 2-methyl-4-amino-5-hydroxymethyl pyrimidine pyrophosphate (HMP-PP) to form thiamine monophosphate (TMP). The chain is Thiamine-phosphate synthase from Pseudomonas putida (strain ATCC 47054 / DSM 6125 / CFBP 8728 / NCIMB 11950 / KT2440).